The sequence spans 171 residues: MDYFTLFGLPARYQIDTQALSLRFQDLQRQYHPDKFANGTQAQQLAAVQQSATINQAWQTLRHPLTRAEYLLSLHGFDLASEQHTVRDTAFLMEQLTLREELDDIEQSKDDVRLESFIKRVQKMFDARLQQMVEQLDNAAWDAAADTVRKLRFLDKLRSSAEQLEEKLLDF.

One can recognise a J domain in the interval 2–74; it reads DYFTLFGLPA…LTRAEYLLSL (73 aa).

This sequence belongs to the HscB family. As to quaternary structure, interacts with HscA and stimulates its ATPase activity. Interacts with IscU.

Its function is as follows. Co-chaperone involved in the maturation of iron-sulfur cluster-containing proteins. Seems to help targeting proteins to be folded toward HscA. The protein is Co-chaperone protein HscB of Salmonella schwarzengrund (strain CVM19633).